Reading from the N-terminus, the 369-residue chain is Glutamate 5-kinase (369 aa).

Lysine 14 contacts ATP. Substrate is bound by residues serine 56, aspartate 143, and asparagine 155. Residues 175–176 and 215–221 each bind ATP; these read SD and TGGMASK. One can recognise a PUA domain in the interval 277–351; that stretch reads AGKIRLDQGA…GMKTQELPDD (75 aa).

The protein belongs to the glutamate 5-kinase family.

The protein resides in the cytoplasm. The enzyme catalyses L-glutamate + ATP = L-glutamyl 5-phosphate + ADP. Its pathway is amino-acid biosynthesis; L-proline biosynthesis; L-glutamate 5-semialdehyde from L-glutamate: step 1/2. In terms of biological role, catalyzes the transfer of a phosphate group to glutamate to form L-glutamate 5-phosphate. The protein is Glutamate 5-kinase of Corynebacterium efficiens (strain DSM 44549 / YS-314 / AJ 12310 / JCM 11189 / NBRC 100395).